The sequence spans 235 residues: Small ribosomal subunit protein eS4 (235 aa).

The S4 RNA-binding domain maps to 37 to 100; it reads LPLGIIIRDI…NEAYRMLQDE (64 aa).

This sequence belongs to the eukaryotic ribosomal protein eS4 family.

The polypeptide is Small ribosomal subunit protein eS4 (Methanosarcina acetivorans (strain ATCC 35395 / DSM 2834 / JCM 12185 / C2A)).